Reading from the N-terminus, the 255-residue chain is 5-oxoprolinase subunit A (255 aa).

The protein belongs to the LamB/PxpA family. In terms of assembly, forms a complex composed of PxpA, PxpB and PxpC.

It catalyses the reaction 5-oxo-L-proline + ATP + 2 H2O = L-glutamate + ADP + phosphate + H(+). In terms of biological role, catalyzes the cleavage of 5-oxoproline to form L-glutamate coupled to the hydrolysis of ATP to ADP and inorganic phosphate. This is 5-oxoprolinase subunit A from Pyrococcus furiosus (strain ATCC 43587 / DSM 3638 / JCM 8422 / Vc1).